Consider the following 217-residue polypeptide: Trichothecene biosynthesis transcription regulator TRI6 (217 aa).

A C2H2-type zinc finger spans residues 185–215 (VRCPWHDQEGQQCLRVFSRVDNMRDHYRRIH).

It localises to the nucleus. In terms of biological role, transcriptional activator of part of the core trichothecene biosynthesis cluster. The sequence is that of Trichothecene biosynthesis transcription regulator TRI6 from Fusarium sporotrichioides.